We begin with the raw amino-acid sequence, 293 residues long: Protein BOBBER 2 (293 aa).

N-acetylalanine is present on Ala2. Residues 50–80 adopt a coiled-coil conformation; the sequence is EKEIVAAVMAAKQRLREAEKKKLEKESVKSM. Basic and acidic residues-rich tracts occupy residues 67–102 and 110–120; these read AEKK…KEES and EIEKPKEEKES. The disordered stretch occupies residues 67-125; the sequence is AEKKKLEKESVKSMEVEKPKKDSLKPTELEKPKEESLMATDPMEIEKPKEEKESGPIVP. Residues 131 to 220 enclose the CS domain; it reads LDFEKYSWGQ…DQMEWWKYCV (90 aa).

It is found in the cytoplasm. Its subcellular location is the cytoplasmic granule. Its function is as follows. Small heat shock protein required for the establishment of auxin gradients and for patterning of the apical domain of the embryo. Involved in the specification of the cotyledon primordia. Also required for normal inflorescence and floral meristem function, normal developmental patterning and thermotolerance. Acts as a molecular chaperone. In Arabidopsis thaliana (Mouse-ear cress), this protein is Protein BOBBER 2 (BOB2).